Reading from the N-terminus, the 78-residue chain is Major outer membrane lipoprotein Lpp (78 aa).

The N-terminal stretch at 1 to 20 is a signal peptide; the sequence is MNRTKLVLGAVILGSTLLAG. Cys-21 carries the N-palmitoyl cysteine lipid modification. Cys-21 is lipidated: S-diacylglycerol cysteine. Residues 22 to 75 adopt a coiled-coil conformation; the sequence is SSNAKIDQLSTDVQTLNAKVDQLSNDVTAIRSDVQAAKDDAARANQRLDNQAHS. 2 consecutive repeats follow at residues 24-34 and 38-48; these read NAKIDQLSTDV and NAKVDQLSNDV. An N6-murein peptidoglycan lysine modification is found at Lys-78.

The protein belongs to the Lpp family. Homotrimer.

It localises to the cell outer membrane. Its subcellular location is the secreted. It is found in the cell wall. A highly abundant outer membrane lipoprotein that controls the distance between the inner and outer membranes. The only protein known to be covalently linked to the peptidoglycan network (PGN). Also non-covalently binds the PGN. The link between the cell outer membrane and PGN contributes to maintenance of the structural and functional integrity of the cell envelope, and maintains the correct distance between the PGN and the outer membrane. The protein is Major outer membrane lipoprotein Lpp of Erwinia amylovora (Fire blight bacteria).